The chain runs to 682 residues: Beta-galactosidase (682 aa).

A signal peptide spans 1–23; that stretch reads MPGFLVRILPLLLPLLLLGPTRG. Residues 24–28 constitute a propeptide that is removed on maturation; it reads LRNAT. Residue Asn26 is glycosylated (N-linked (GlcNAc...) asparagine). Residues Tyr83, Glu129, and Asn187 each coordinate substrate. Residue Glu188 is the Proton donor of the active site. Cys195 and Cys230 are oxidised to a cystine. An N-linked (GlcNAc...) asparagine glycan is attached at Asn247. Glu268 functions as the Nucleophile in the catalytic mechanism. Tyr333 contributes to the substrate binding site. N-linked (GlcNAc...) asparagine glycosylation is found at Asn464, Asn498, Asn545, and Asn555. A disulfide bridge links Cys626 with Cys634.

Belongs to the glycosyl hydrolase 35 family. Homodimer. May form higher multimers.

Its subcellular location is the lysosome. It carries out the reaction Hydrolysis of terminal non-reducing beta-D-galactose residues in beta-D-galactosides.. Cleaves beta-linked terminal galactosyl residues from gangliosides, glycoproteins, and glycosaminoglycans. This chain is Beta-galactosidase (GLB1), found in Macaca fascicularis (Crab-eating macaque).